The sequence spans 45 residues: Photosystem II reaction center protein K (45 aa).

A propeptide spanning residues 1-8 is cleaved from the precursor; it reads MEGILFLA. The chain crosses the membrane as a helical span at residues 24–44; it reads APVIPVFFLLLAFVWQAAVGF.

This sequence belongs to the PsbK family. PSII is composed of 1 copy each of membrane proteins PsbA, PsbB, PsbC, PsbD, PsbE, PsbF, PsbH, PsbI, PsbJ, PsbK, PsbL, PsbM, PsbT, PsbX, PsbY, PsbZ, Psb30/Ycf12, at least 3 peripheral proteins of the oxygen-evolving complex and a large number of cofactors. It forms dimeric complexes.

The protein resides in the plastid. It localises to the chloroplast thylakoid membrane. In terms of biological role, one of the components of the core complex of photosystem II (PSII). PSII is a light-driven water:plastoquinone oxidoreductase that uses light energy to abstract electrons from H(2)O, generating O(2) and a proton gradient subsequently used for ATP formation. It consists of a core antenna complex that captures photons, and an electron transfer chain that converts photonic excitation into a charge separation. This Guillardia theta (Cryptophyte) protein is Photosystem II reaction center protein K.